Consider the following 161-residue polypeptide: Protein PLASTID TRANSCRIPTIONALLY ACTIVE 7 (161 aa).

The transit peptide at 1 to 32 (MASFTCSSPSSILPIIDTRSGNLRCTFQSQVS) directs the protein to the chloroplast.

As to quaternary structure, component of the transcriptionally active chromosome (TAC) complexes. Interacts with FLN1, PTAC10, PTAC12/HMR/PAP5 and PTAC14. Binds to SL1/MTERF3. As to expression, mostly expressed in leaves, flowers and seedlings, and, to a lower extent, in roots and stems.

It is found in the plastid. The protein localises to the chloroplast. In terms of biological role, essential for chloroplast development, especially for thylakoid formation. Involved in plastid gene expression, probably by maintaining plastid-encoded RNA polymerase (PEP) activity. This chain is Protein PLASTID TRANSCRIPTIONALLY ACTIVE 7, found in Arabidopsis thaliana (Mouse-ear cress).